A 437-amino-acid chain; its full sequence is Na(+)/H(+) antiporter NhaA (437 aa).

Helical transmembrane passes span 12–32 (SMNITASILLFVTAIAAAVIA), 65–85 (LTMIEFINDGLMTIFFLMVGL), 103–123 (ALPFIAACGGMVVPVVIYSMV), 133–153 (GLAIPMATDIAFSLGVLSLLG), 162–182 (IFLTAFAVVDDIGGILVIAIF), 186–206 (HVAYEYLLWAALLYVLLYFIG), 214–234 (IFFLVVGVVIWYLFLQSGIHS), 308–328 (GAVNYLVLPLFAFVNAGVMFS), 333–353 (VIGGVTLAVALGLLAGKFLGI), 377–397 (ISGVALLGGIGFTVSLFIANL), and 412–432 (LGVLSGTVMAGILGYLVLHWV).

The protein belongs to the NhaA Na(+)/H(+) (TC 2.A.33) antiporter family.

The protein resides in the cell inner membrane. The catalysed reaction is Na(+)(in) + 2 H(+)(out) = Na(+)(out) + 2 H(+)(in). Its function is as follows. Na(+)/H(+) antiporter that extrudes sodium in exchange for external protons. The polypeptide is Na(+)/H(+) antiporter NhaA (Bacteroides fragilis (strain YCH46)).